We begin with the raw amino-acid sequence, 129 residues long: Short-chain dehydrogenase/reductase homolog YusR (129 aa).

This sequence belongs to the short-chain dehydrogenases/reductases (SDR) family.

This is Short-chain dehydrogenase/reductase homolog YusR (yusR) from Bacillus subtilis (strain 168).